The primary structure comprises 247 residues: tRNA (guanine-N(1)-)-methyltransferase (247 aa).

S-adenosyl-L-methionine is bound by residues Gly-115 and 134–139 (IGDFVL).

The protein belongs to the RNA methyltransferase TrmD family. In terms of assembly, homodimer.

It is found in the cytoplasm. The catalysed reaction is guanosine(37) in tRNA + S-adenosyl-L-methionine = N(1)-methylguanosine(37) in tRNA + S-adenosyl-L-homocysteine + H(+). Functionally, specifically methylates guanosine-37 in various tRNAs. The protein is tRNA (guanine-N(1)-)-methyltransferase of Anaeromyxobacter dehalogenans (strain 2CP-C).